The primary structure comprises 340 residues: Anthranilate phosphoribosyltransferase (340 aa).

5-phospho-alpha-D-ribose 1-diphosphate-binding positions include Gly82, 85-86, Thr90, 92-95, 110-118, and Ser122; these read GD, NIST, and KHGSRSVSS. Gly82 is an anthranilate binding site. Ser94 contacts Mg(2+). Arg168 contributes to the anthranilate binding site. The Mg(2+) site is built by Asp227 and Glu228.

Belongs to the anthranilate phosphoribosyltransferase family. As to quaternary structure, homodimer. It depends on Mg(2+) as a cofactor.

The catalysed reaction is N-(5-phospho-beta-D-ribosyl)anthranilate + diphosphate = 5-phospho-alpha-D-ribose 1-diphosphate + anthranilate. Its pathway is amino-acid biosynthesis; L-tryptophan biosynthesis; L-tryptophan from chorismate: step 2/5. In terms of biological role, catalyzes the transfer of the phosphoribosyl group of 5-phosphorylribose-1-pyrophosphate (PRPP) to anthranilate to yield N-(5'-phosphoribosyl)-anthranilate (PRA). The chain is Anthranilate phosphoribosyltransferase from Hydrogenovibrio crunogenus (strain DSM 25203 / XCL-2) (Thiomicrospira crunogena).